The following is a 173-amino-acid chain: Mesencephalic astrocyte-derived neurotrophic factor homolog (173 aa).

Residues 1–22 form the signal peptide; that stretch reads MNTSHIVLMICFIVGVGQTALA. 4 cysteine pairs are disulfide-bonded: Cys-28–Cys-114, Cys-31–Cys-103, Cys-61–Cys-72, and Cys-148–Cys-151.

This sequence belongs to the ARMET family.

It is found in the secreted. Its function is as follows. Required during the maturation of the embryonic nervous system for maintenance of neuronal and cuticular connectivity. Essential for maintenance of dopaminergic neurons and dopamine levels. The protein is Mesencephalic astrocyte-derived neurotrophic factor homolog of Drosophila virilis (Fruit fly).